A 305-amino-acid polypeptide reads, in one-letter code: Oxygen-dependent coproporphyrinogen-III oxidase (305 aa).

Ser98 is a binding site for substrate. 2 residues coordinate a divalent metal cation: His102 and His112. His112 (proton donor) is an active-site residue. 114–116 (NVR) provides a ligand contact to substrate. A divalent metal cation-binding residues include His151 and His181. Positions 246–281 (YVEFNLVYDRGTLFGLQSGGRTESILMSMPPLARWE) are important for dimerization. Position 264-266 (264-266 (GGR)) interacts with substrate.

Belongs to the aerobic coproporphyrinogen-III oxidase family. Homodimer. It depends on a divalent metal cation as a cofactor.

It localises to the cytoplasm. The enzyme catalyses coproporphyrinogen III + O2 + 2 H(+) = protoporphyrinogen IX + 2 CO2 + 2 H2O. Its pathway is porphyrin-containing compound metabolism; protoporphyrin-IX biosynthesis; protoporphyrinogen-IX from coproporphyrinogen-III (O2 route): step 1/1. Its function is as follows. Involved in the heme biosynthesis. Catalyzes the aerobic oxidative decarboxylation of propionate groups of rings A and B of coproporphyrinogen-III to yield the vinyl groups in protoporphyrinogen-IX. The sequence is that of Oxygen-dependent coproporphyrinogen-III oxidase from Vibrio parahaemolyticus serotype O3:K6 (strain RIMD 2210633).